The primary structure comprises 137 residues: Peptide methionine sulfoxide reductase MsrB (137 aa).

Residues 7-129 (PTENIEKLTD…NSASLNFVDD (123 aa)) form the MsrB domain. Zn(2+) is bound by residues Cys46, Cys49, Cys95, and Cys98. Cys118 (nucleophile) is an active-site residue.

This sequence belongs to the MsrB Met sulfoxide reductase family. Zn(2+) serves as cofactor.

The enzyme catalyses L-methionyl-[protein] + [thioredoxin]-disulfide + H2O = L-methionyl-(R)-S-oxide-[protein] + [thioredoxin]-dithiol. This Yersinia enterocolitica serotype O:8 / biotype 1B (strain NCTC 13174 / 8081) protein is Peptide methionine sulfoxide reductase MsrB.